A 552-amino-acid chain; its full sequence is Formate--tetrahydrofolate ligase (552 aa).

63 to 70 (TPFGEGKT) contributes to the ATP binding site.

This sequence belongs to the formate--tetrahydrofolate ligase family.

It catalyses the reaction (6S)-5,6,7,8-tetrahydrofolate + formate + ATP = (6R)-10-formyltetrahydrofolate + ADP + phosphate. It functions in the pathway one-carbon metabolism; tetrahydrofolate interconversion. The chain is Formate--tetrahydrofolate ligase from Caldicellulosiruptor bescii (strain ATCC BAA-1888 / DSM 6725 / KCTC 15123 / Z-1320) (Anaerocellum thermophilum).